The chain runs to 197 residues: Adenylate kinase 1 (197 aa).

Position 19-24 (19-24 (GSGKGT)) interacts with ATP. Positions 39-68 (SSGDLLRAEVQSGSPKGKELKAMMERGELV) are NMP. Residues Ser40, Arg45, 95–98 (GYPR), and Gln102 contribute to the AMP site. The interval 132–142 (KRAETSNRVDD) is LID. Arg133 is an ATP binding site. Residues Arg139 and Arg150 each coordinate AMP. Gly178 contributes to the ATP binding site.

The protein belongs to the adenylate kinase family. AK1 subfamily. As to quaternary structure, monomer. It depends on Mg(2+) as a cofactor.

Its subcellular location is the cytoplasm. The catalysed reaction is AMP + ATP = 2 ADP. Its pathway is purine metabolism; purine nucleotide biosynthesis. Its function is as follows. Catalyzes the reversible transfer of the terminal phosphate group between ATP and AMP. Plays an important role in cellular energy homeostasis and in adenine nucleotide metabolism. This chain is Adenylate kinase 1, found in Schistosoma mansoni (Blood fluke).